Reading from the N-terminus, the 159-residue chain is 2-C-methyl-D-erythritol 2,4-cyclodiphosphate synthase (159 aa).

Residues Asp-10 and His-12 each coordinate a divalent metal cation. Residues 10–12 and 36–37 contribute to the 4-CDP-2-C-methyl-D-erythritol 2-phosphate site; these read DVH and HS. His-44 lines the a divalent metal cation pocket. Residues 58-60, 63-67, 102-108, 134-137, Phe-141, and Arg-144 each bind 4-CDP-2-C-methyl-D-erythritol 2-phosphate; these read DIG, FPDTD, AQAPKMA, and TTTE.

The protein belongs to the IspF family. Homotrimer. The cofactor is a divalent metal cation.

The enzyme catalyses 4-CDP-2-C-methyl-D-erythritol 2-phosphate = 2-C-methyl-D-erythritol 2,4-cyclic diphosphate + CMP. The protein operates within isoprenoid biosynthesis; isopentenyl diphosphate biosynthesis via DXP pathway; isopentenyl diphosphate from 1-deoxy-D-xylulose 5-phosphate: step 4/6. In terms of biological role, involved in the biosynthesis of isopentenyl diphosphate (IPP) and dimethylallyl diphosphate (DMAPP), two major building blocks of isoprenoid compounds. Catalyzes the conversion of 4-diphosphocytidyl-2-C-methyl-D-erythritol 2-phosphate (CDP-ME2P) to 2-C-methyl-D-erythritol 2,4-cyclodiphosphate (ME-CPP) with a corresponding release of cytidine 5-monophosphate (CMP). This is 2-C-methyl-D-erythritol 2,4-cyclodiphosphate synthase from Shewanella frigidimarina (strain NCIMB 400).